The chain runs to 1168 residues: Probable pre-mRNA-splicing factor ATP-dependent RNA helicase DEAH5 (1168 aa).

The segment at 76 to 206 (IYPPKPKSEK…KDEYVEEDKG (131 aa)) is disordered. Composition is skewed to basic and acidic residues over residues 81–172 (PKSE…DRRS) and 180–206 (GRGD…EDKG). The region spanning 214–283 (YQVYKGRVTR…SSDKYSLSMR (70 aa)) is the S1 motif domain. Residues 289 to 326 (TGRDLIPLRKPSDEDDSSRSNPSYRTKDGQVTKTGISG) are disordered. Serine 411 is subject to Phosphoserine. Residues 525–688 (IQAVHDNQVL…FFNCNIFTIP (164 aa)) form the Helicase ATP-binding domain. 538–545 (GETGSGKT) is a binding site for ATP. The DEAH box signature appears at 635–638 (DEAH). Positions 706-886 (YLDAALITVL…MTTLTMKAMG (181 aa)) constitute a Helicase C-terminal domain.

This sequence belongs to the DEAD box helicase family. DEAH subfamily. PRP22 sub-subfamily.

It localises to the nucleus. It carries out the reaction ATP + H2O = ADP + phosphate + H(+). Functionally, may be involved in pre-mRNA splicing. The polypeptide is Probable pre-mRNA-splicing factor ATP-dependent RNA helicase DEAH5 (Arabidopsis thaliana (Mouse-ear cress)).